Reading from the N-terminus, the 512-residue chain is MAEIVDCFADRPIIVGSGLAGLIAALTMSPEPSVLVTRSALGAETSSAWAQGGMSVSLSPDDNPSLHLADTLAAGDGLCDAVAAESIILEALDAFHVLQHFGIHFDQDSNGHLALGLEAAHSRRRIVHVGGDRSGTAIVQALTACVLNDPSITVLEGLEARHILMADNVVCGLLLANPTSEIVLPSSRILLATGGIGGLYDATTNPVSNFGQGIAMAARAGAVLADMEFVQFHPTALHCHNRPLALVSEAVRGEGAVLINERGERFMADIPGAELAARNIVAQAISAEITRGGQVFLDARQALGARFSTRFPTITALCHKVGIDPVHMPIPVCPAAHYHMGGIAIDHQGRSSIPGLWVAGEAASTGLHGANRLASNSLLEAVVMGTRAARDITFHNTPHPLGTIPITPKKPDTTLIRPIVSQCLGVLRHAADMHRAIAALLPFVEGEEESSDPAIVALLIAIFAYLRTESRGAHARTDFPLKHDTTQRRHMTLEDVLEIAHSCVAQRKEKIS.

FAD is bound by residues 17–20 (SGLA) and 46–53 (SSAWAQGG). The Proton donor/acceptor role is filled by R278. FAD contacts are provided by residues E361 and 377–378 (SL).

This sequence belongs to the FAD-dependent oxidoreductase 2 family. NadB subfamily. FAD is required as a cofactor.

Its subcellular location is the cytoplasm. It catalyses the reaction L-aspartate + O2 = iminosuccinate + H2O2. Its pathway is cofactor biosynthesis; NAD(+) biosynthesis; iminoaspartate from L-aspartate (oxidase route): step 1/1. In terms of biological role, catalyzes the oxidation of L-aspartate to iminoaspartate, the first step in the de novo biosynthesis of NAD(+). This chain is L-aspartate oxidase (nadB), found in Xylella fastidiosa (strain 9a5c).